The sequence spans 318 residues: C1GALT1-specific chaperone 1 (318 aa).

Topologically, residues 1–6 are cytoplasmic; sequence MLSESS. Residues 7–26 traverse the membrane as a helical; Signal-anchor for type II membrane protein segment; it reads SFLKGVMLGSIFCALITMLG. Residues 27-318 lie on the Lumenal side of the membrane; sequence HIRIGHGSRM…FLPPNGSDND (292 aa).

It belongs to the glycosyltransferase 31 family. Beta3-Gal-T subfamily. Associates with core 1 beta-3-galactosyltransferase (C1GALT1), probably not with the soluble active form.

It localises to the membrane. Its function is as follows. Probable chaperone required for the generation of 1 O-glycan Gal-beta1-3GalNAc-alpha1-Ser/Thr (T antigen), which is a precursor for many extended O-glycans in glycoproteins. Probably acts as a specific molecular chaperone assisting the folding/stability of core 1 beta-3-galactosyltransferase (C1GALT1). The sequence is that of C1GALT1-specific chaperone 1 (C1GALT1C1) from Bos taurus (Bovine).